The chain runs to 395 residues: Chorismate synthase (395 aa).

NADP(+) contacts are provided by R40 and R46. FMN-binding positions include 135–137 (RAS) and 256–257 (QA). The span at 272–283 (RRGSQAHDEMRP) shows a compositional bias: basic and acidic residues. The tract at residues 272–296 (RRGSQAHDEMRPGPDGILRSTNRAG) is disordered. FMN contacts are provided by residues G300, 315-319 (KPIST), and R341.

Belongs to the chorismate synthase family. Homotetramer. The cofactor is FMNH2.

The catalysed reaction is 5-O-(1-carboxyvinyl)-3-phosphoshikimate = chorismate + phosphate. Its pathway is metabolic intermediate biosynthesis; chorismate biosynthesis; chorismate from D-erythrose 4-phosphate and phosphoenolpyruvate: step 7/7. In terms of biological role, catalyzes the anti-1,4-elimination of the C-3 phosphate and the C-6 proR hydrogen from 5-enolpyruvylshikimate-3-phosphate (EPSP) to yield chorismate, which is the branch point compound that serves as the starting substrate for the three terminal pathways of aromatic amino acid biosynthesis. This reaction introduces a second double bond into the aromatic ring system. This Rhodococcus opacus (strain B4) protein is Chorismate synthase.